We begin with the raw amino-acid sequence, 298 residues long: Nucleoid occlusion protein (298 aa).

A DNA-binding region (H-T-H motif) is located at residues 152–171 (EALAQRLGKGQSTVANKLRL).

The protein belongs to the ParB family.

Its subcellular location is the cytoplasm. The protein localises to the nucleoid. Functionally, effects nucleoid occlusion by binding relatively nonspecifically to DNA and preventing the assembly of the division machinery in the vicinity of the nucleoid, especially under conditions that disturb the cell cycle. It helps to coordinate cell division and chromosome segregation by preventing the formation of the Z ring through the nucleoid, which would cause chromosome breakage. This chain is Nucleoid occlusion protein, found in Lysinibacillus sphaericus (strain C3-41).